We begin with the raw amino-acid sequence, 265 residues long: Small ribosomal subunit protein eS4 (265 aa).

In terms of domain architecture, S4 RNA-binding spans 42-104 (LPLILIIRNR…TNENYRLLYD (63 aa)).

Belongs to the eukaryotic ribosomal protein eS4 family.

Its subcellular location is the cytoplasm. The chain is Small ribosomal subunit protein eS4 (RPS4) from Zea mays (Maize).